Reading from the N-terminus, the 360-residue chain is Phospho-N-acetylmuramoyl-pentapeptide-transferase (360 aa).

Helical transmembrane passes span Leu-2–Leu-22, Ala-26–Arg-46, Thr-73–Leu-93, Tyr-97–Trp-117, Tyr-134–Leu-154, Ile-168–Ser-188, Gly-199–Ser-219, Thr-236–Phe-256, Val-263–Ile-283, Leu-288–Val-308, and Ile-339–Ile-359.

This sequence belongs to the glycosyltransferase 4 family. MraY subfamily. Mg(2+) is required as a cofactor.

The protein resides in the cell inner membrane. It carries out the reaction UDP-N-acetyl-alpha-D-muramoyl-L-alanyl-gamma-D-glutamyl-meso-2,6-diaminopimeloyl-D-alanyl-D-alanine + di-trans,octa-cis-undecaprenyl phosphate = di-trans,octa-cis-undecaprenyl diphospho-N-acetyl-alpha-D-muramoyl-L-alanyl-D-glutamyl-meso-2,6-diaminopimeloyl-D-alanyl-D-alanine + UMP. It participates in cell wall biogenesis; peptidoglycan biosynthesis. Functionally, catalyzes the initial step of the lipid cycle reactions in the biosynthesis of the cell wall peptidoglycan: transfers peptidoglycan precursor phospho-MurNAc-pentapeptide from UDP-MurNAc-pentapeptide onto the lipid carrier undecaprenyl phosphate, yielding undecaprenyl-pyrophosphoryl-MurNAc-pentapeptide, known as lipid I. The sequence is that of Phospho-N-acetylmuramoyl-pentapeptide-transferase from Hahella chejuensis (strain KCTC 2396).